Consider the following 41-residue polypeptide: Alpha-conotoxin TxIB (41 aa).

The propeptide occupies 1-20 (FDGRNTSANNKATDLMALPV). 2 disulfides stabilise this stretch: C23-C29 and C24-C37. Residues 25–27 (SDP) form a ser-Xaa-Pro motif, crucial for potent interaction with nAChR region. A Cysteine amide; in Alpha-conotoxin TxIB modification is found at C37. The propeptide occupies 39-41 (GRR).

It belongs to the conotoxin A superfamily. Expressed by the venom duct.

Its subcellular location is the secreted. Its function is as follows. Alpha-conotoxins act on postsynaptic membranes, they bind to the nicotinic acetylcholine receptors (nAChR) and thus inhibit them. This conotoxin is a subtype-specific blocker of alpha-6/alpha-3-beta-2-beta-3 (CHRNA6/CHRNA3-CHRNB2-CHRNB3) nAChRs nicotinic acetylcholine receptors (nAChRs) (IC(50)=28.4 nM). This Conus textile (Cloth-of-gold cone) protein is Alpha-conotoxin TxIB.